A 215-amino-acid chain; its full sequence is Adenylate kinase (215 aa).

10–15 (GAGKGT) lines the ATP pocket. The NMP stretch occupies residues 30-59 (STGDMLRAAVKAGTELGLKAKSVMDAGGLV). AMP contacts are provided by residues T31, R36, 57–59 (GLV), 85–88 (GFPR), and Q92. The LID stretch occupies residues 122–159 (GRRVHPASGRVYHTEYNPPKVAGKDDVSGEELVQREDD). ATP contacts are provided by residues R123 and 132–133 (VY). Residues R156 and R167 each coordinate AMP. G201 serves as a coordination point for ATP.

It belongs to the adenylate kinase family. Monomer.

The protein resides in the cytoplasm. It carries out the reaction AMP + ATP = 2 ADP. The protein operates within purine metabolism; AMP biosynthesis via salvage pathway; AMP from ADP: step 1/1. In terms of biological role, catalyzes the reversible transfer of the terminal phosphate group between ATP and AMP. Plays an important role in cellular energy homeostasis and in adenine nucleotide metabolism. The protein is Adenylate kinase of Ectopseudomonas mendocina (strain ymp) (Pseudomonas mendocina).